A 68-amino-acid polypeptide reads, in one-letter code: DNA-directed RNA polymerase subunit omega (68 aa).

This sequence belongs to the RNA polymerase subunit omega family. In terms of assembly, the RNAP catalytic core consists of 2 alpha, 1 beta, 1 beta' and 1 omega subunit. When a sigma factor is associated with the core the holoenzyme is formed, which can initiate transcription.

It catalyses the reaction RNA(n) + a ribonucleoside 5'-triphosphate = RNA(n+1) + diphosphate. Promotes RNA polymerase assembly. Latches the N- and C-terminal regions of the beta' subunit thereby facilitating its interaction with the beta and alpha subunits. The sequence is that of DNA-directed RNA polymerase subunit omega from Desulfitobacterium hafniense (strain DSM 10664 / DCB-2).